Consider the following 631-residue polypeptide: Cyclic nucleotide-gated channel alpha-3 (631 aa).

Positions 1–18 (MAKVNTQCSQPSPTQLSI) are enriched in polar residues. Disordered stretches follow at residues 1-21 (MAKV…IKNA) and 71-98 (EVST…RKEE). At 1-111 (MAKVNTQCSQ…VDPSSNIYYR (111 aa)) the chain is on the cytoplasmic side. The segment covering 87-98 (KPPDGGEGRKEE) has biased composition (basic and acidic residues). Residues 112–133 (WLTAIALPVFYNWCLLVCRACF) traverse the membrane as a helical segment. Residues 134 to 139 (DELQSE) are Extracellular-facing. The helical transmembrane segment at 140–160 (HLTLWLVLDYSADVLYVLDML) threads the bilayer. Topologically, residues 161-187 (VRARTGFLEQGLMVRDTKRLWKHYTKT) are cytoplasmic. A helical membrane pass occupies residues 188 to 207 (LHFKLDILSLIPTDLAYLKL). The Extracellular portion of the chain corresponds to 208–211 (GVNY). Residues 212–229 (PELRFNRLLKFSRLFEFF) traverse the membrane as a helical segment. The Cytoplasmic portion of the chain corresponds to 230-239 (DRTETRTNYP). The segment at 239–347 (PNVFRIGNLV…GNVGSMISNM (109 aa)) is ion conduction pathway. A helical membrane pass occupies residues 240–262 (NVFRIGNLVLYTLIIIHWNACIY). The Extracellular portion of the chain corresponds to 263–288 (FAISKFIGFGTDSWVYPNTSKPEYAR). Asn280 carries N-linked (GalNAc...) asparagine glycosylation. A run of 2 helical transmembrane segments spans residues 289–319 (LSRK…DEEY) and 320–344 (LFVV…GSMI). Positions 306–309 (TIGE) are selectivity filter. Residues 345-631 (SNMNAPRVEF…ENSEDASKTD (287 aa)) are Cytoplasmic-facing. The interval 349–426 (APRVEFQAKI…TLKKVRIFQD (78 aa)) is C-linker. Residues 429-549 (AGLLVELVLK…EEKGRQILMK (121 aa)) form a cyclic nucleotide-binding domain region. Positions 489, 490, 492, 505, 506, and 550 each coordinate 3',5'-cyclic GMP. The stretch at 567–610 (VEEKVEYLESSLDILQTRFARLLAEYSASQMKLKQRLTRLESQM) forms a coiled coil.

Belongs to the cyclic nucleotide-gated cation channel (TC 1.A.1.5) family. CNGA3 subfamily. Forms heterotetrameric channels composed of CNGA3 and CNGB3 subunits with 3:1 stoichiometry. As to expression, prominently expressed in retina.

The protein resides in the cell membrane. It carries out the reaction Ca(2+)(in) = Ca(2+)(out). The catalysed reaction is Na(+)(in) = Na(+)(out). The enzyme catalyses K(+)(in) = K(+)(out). It catalyses the reaction NH4(+)(in) = NH4(+)(out). It carries out the reaction Rb(+)(in) = Rb(+)(out). The catalysed reaction is Li(+)(in) = Li(+)(out). The enzyme catalyses Cs(+)(in) = Cs(+)(out). In terms of biological role, pore-forming subunit of the cone cyclic nucleotide-gated channel. Mediates cone photoresponses at bright light converting transient changes in intracellular cGMP levels into electrical signals. In the dark, cGMP levels are high and keep the channel open enabling a steady inward current carried by Na(+) and Ca(2+) ions that leads to membrane depolarization and neurotransmitter release from synaptic terminals. Upon photon absorption cGMP levels decline leading to channel closure and membrane hyperpolarization that ultimately slows neurotransmitter release and signals the presence of light, the end point of the phototransduction cascade. Pore-forming subunit of the gustatory cyclic nucleotide-gated channel. In the taste buds, may sense oral extracellular pH and conduct ion currents that modulate the excitability of taste cells. Conducts cGMP- and cAMP-gated ion currents, with permeability for monovalent and divalent cations. This is Cyclic nucleotide-gated channel alpha-3 from Mus musculus (Mouse).